Consider the following 205-residue polypeptide: MSLNYIKNFYEGCVKPPTVIGQFHTLFFGSIRIFFLGVLGFAVYGNEALHFICDPDKREVNLFCYNQFRPITPQVSFSALQLVIVLVPGALFHLYAACKSINQECILQKPIYTIIYILSVLLRISLAAIAFWLQIYLFGFQVKSLYLCDARSLGENMIIRCMVPEHFEKTIFLIAINTFTTITILLFVAEIFEIIFRRLYFPFRQ.

Residues 1–23 (MSLNYIKNFYEGCVKPPTVIGQF) are Cytoplasmic-facing. Residues 24-44 (HTLFFGSIRIFFLGVLGFAVY) traverse the membrane as a helical segment. Residues 45–76 (GNEALHFICDPDKREVNLFCYNQFRPITPQVS) lie on the Extracellular side of the membrane. 2 disulfide bridges follow: C53/C161 and C64/C148. Residues 77–97 (FSALQLVIVLVPGALFHLYAA) traverse the membrane as a helical segment. Residues 98-112 (CKSINQECILQKPIY) are Cytoplasmic-facing. The chain crosses the membrane as a helical span at residues 113–133 (TIIYILSVLLRISLAAIAFWL). Topologically, residues 134–170 (QIYLFGFQVKSLYLCDARSLGENMIIRCMVPEHFEKT) are extracellular. A helical membrane pass occupies residues 171-191 (IFLIAINTFTTITILLFVAEI). Over 192 to 205 (FEIIFRRLYFPFRQ) the chain is Cytoplasmic.

Belongs to the connexin family. Beta-type (group I) subfamily. A connexon is composed of a hexamer of connexins. As to expression, not detected in lens or retina.

The protein localises to the cell membrane. In terms of biological role, mediates calcium-independent ATP release, suggesting activity as a hemichannel. Does not form functional gap junctions. The protein is Gap junction epsilon-1 protein (GJE1) of Homo sapiens (Human).